A 420-amino-acid polypeptide reads, in one-letter code: MADLSKKYCVYCLADVTSLRLRCTECQDIELCTDCFSAGAEIGNHRRWHGYQLVDGGRFTLWGPEAEGGWTSREEQLLLDAIEQFGFGNWEDMAAHVGASRTPTEVMEHYVTMYIHGNLGKACIPDSIPNRVTDHTCPTGGPLSPSLTTPLPTLDLTVADQQQLGYMPLRDDYEIEFDQEAETLISGLSVNYDDDDVEVELKEAYVDMYVRKLKERQRRKSLARDYNLVPAFLGKDKKEKEKPAKRKISKEEKELRLKLRPLYQFMSNKEIEDCFENMHKERMLRAKIRELQRYRRNGITKTEESAEYEAARHKREKRKENKNIANSKRGREDGKESEFAAIENLAGFELLSDREKVLCSSLNLSPTRYLTVKTIIIKDHLQKRQGIPSKSRLPSYLDKVLKKRILNFLTESGWISRDAS.

The ZZ-type zinc finger occupies 4 to 59 (LSKKYCVYCLADVTSLRLRCTECQDIELCTDCFSAGAEIGNHRRWHGYQLVDGGRF). Residues cysteine 9, cysteine 12, cysteine 23, cysteine 26, cysteine 32, cysteine 35, histidine 45, and histidine 49 each coordinate Zn(2+). Residues 65 to 118 (EAEGGWTSREEQLLLDAIEQFGFGNWEDMAAHVGASRTPTEVMEHYVTMYIHGN) form the SANT domain. The interval 303-333 (EESAEYEAARHKREKRKENKNIANSKRGRED) is disordered.

It localises to the nucleus. Functionally, transcriptional coactivator. This Xenopus laevis (African clawed frog) protein is Transcriptional adapter 2-beta (tada2b).